We begin with the raw amino-acid sequence, 78 residues long: MVKEEKQENRGSVEFQVFSFTNKIRRLASHLELHKKDFSSERGLRRLLGKRQRLLAYLAKKNRVRYKKLISQLDIREK.

It belongs to the universal ribosomal protein uS15 family. Part of the 30S ribosomal subunit.

The protein resides in the plastid. Its subcellular location is the chloroplast. This is Small ribosomal subunit protein uS15c (rps15-A) from Saccharum officinarum (Sugarcane).